Reading from the N-terminus, the 140-residue chain is Large ribosomal subunit protein bL17 (140 aa).

The protein belongs to the bacterial ribosomal protein bL17 family. As to quaternary structure, part of the 50S ribosomal subunit. Contacts protein L32.

The polypeptide is Large ribosomal subunit protein bL17 (Rhizobium etli (strain CIAT 652)).